Consider the following 454-residue polypeptide: Ribosomal protein uS12 methylthiotransferase RimO (454 aa).

In terms of domain architecture, MTTase N-terminal spans 14–125; that stretch reads SKIAFSHVGC…IAKVLDRVEK (112 aa). Positions 23, 59, 88, 163, 167, and 170 each coordinate [4Fe-4S] cluster. Residues 149–378 enclose the Radical SAM core domain; the sequence is DKNKFVAYLR…ISVQQNISRE (230 aa). Residues 381-452 form the TRAM domain; sequence QIYVGSKMKI…EYDLYGETIK (72 aa).

Belongs to the methylthiotransferase family. RimO subfamily. [4Fe-4S] cluster serves as cofactor.

It localises to the cytoplasm. It carries out the reaction L-aspartate(89)-[ribosomal protein uS12]-hydrogen + (sulfur carrier)-SH + AH2 + 2 S-adenosyl-L-methionine = 3-methylsulfanyl-L-aspartate(89)-[ribosomal protein uS12]-hydrogen + (sulfur carrier)-H + 5'-deoxyadenosine + L-methionine + A + S-adenosyl-L-homocysteine + 2 H(+). Functionally, catalyzes the methylthiolation of an aspartic acid residue of ribosomal protein uS12. The polypeptide is Ribosomal protein uS12 methylthiotransferase RimO (Prochlorococcus marinus (strain MIT 9301)).